An 887-amino-acid polypeptide reads, in one-letter code: Pre-mRNA-splicing factor cwf22 (887 aa).

The interval 1 to 27 (MEKEDKSFGIGMLDYNRENPESSGHSR) is disordered. The 184-residue stretch at 124–307 (KKSINGLINK…EVLFQTRKDK (184 aa)) folds into the MIF4G domain. A disordered region spans residues 366–401 (ILGEEDDDENEEDEEDSEETSESEEDESVNDEKPQV). A compositionally biased stretch (acidic residues) spans 368–394 (GEEDDDENEEDEEDSEETSESEEDESV). The MI domain occupies 411-527 (NLRKSIYLTI…GWEVYDCVRL (117 aa)). 2 disordered regions span residues 607-834 (MPKS…KTYH) and 867-887 (GELYKDRNSESDSVRKQPRAD). Low complexity predominate over residues 618-662 (EGYSSGSETGSTYSSSYSSTYSRGRSYSRSTRSYSKSRSYSRSRS). Serine 662 carries the post-translational modification Phosphoserine. At threonine 664 the chain carries Phosphothreonine. Residues 677-690 (KDRELSPRGRERSS) show a composition bias toward basic and acidic residues. The span at 691 to 712 (NRNSYSDLSRSSSLSRGRSRSY) shows a compositional bias: low complexity. The span at 717–726 (RLIESEDKGY) shows a compositional bias: basic and acidic residues. Basic residues predominate over residues 736–746 (RKYRSRQRYRR). Composition is skewed to low complexity over residues 747-762 (SYAGSTSRGRSFSRSP) and 769-791 (SMSCSVSYSRSPSPAARPISRSP). The segment covering 799-809 (DSLSYNRQYSP) has biased composition (polar residues).

Belongs to the CWC22 family. In terms of assembly, belongs to the 40S cdc5-associated complex (or cwf complex), a spliceosome sub-complex reminiscent of a late-stage spliceosome composed of the U2, U5 and U6 snRNAs and at least brr2, cdc5, cwf2/prp3, cwf3/syf1, cwf4/syf3, cwf5/ecm2, spp42/cwf6, cwf7/spf27, cwf8, cwf9, cwf10, cwf11, cwf12, prp45/cwf13, cwf14, cwf15, cwf16, cwf17, cwf18, cwf19, cwf20, cwf21, cwf22, cwf23, cwf24, cwf25, cwf26, cyp7/cwf27, cwf28, cwf29/ist3, lea1, msl1, prp5/cwf1, prp10, prp12/sap130, prp17, prp22, sap61, sap62, sap114, sap145, slu7, smb1, smd1, smd3, smf1, smg1 and syf2.

The protein localises to the cytoplasm. It localises to the nucleus. Its function is as follows. May be involved in pre-mRNA splicing. This is Pre-mRNA-splicing factor cwf22 (cwf22) from Schizosaccharomyces pombe (strain 972 / ATCC 24843) (Fission yeast).